A 45-amino-acid chain; its full sequence is Osteocalcin 1 (45 aa).

The Gla domain occupies 1-41 (AAGQLSLTQLESLREVCELNLACEHMMDTEGIIAAYTAYYG). Ca(2+) contacts are provided by glutamate 11, glutamate 15, glutamate 18, and glutamate 24. 3 positions are modified to 4-carboxyglutamate: glutamate 11, glutamate 15, and glutamate 18. Cysteine 17 and cysteine 23 form a disulfide bridge.

It belongs to the osteocalcin/matrix Gla protein family. In terms of processing, gamma-carboxyglutamate residues are formed by vitamin K dependent carboxylation by GGCX. These residues are essential for the binding of calcium.

The protein resides in the secreted. Functionally, the carboxylated form is one of the main organic components of the bone matrix, which constitutes 1-2% of the total bone protein. The carboxylated form binds strongly to apatite and calcium. This is Osteocalcin 1 from Diplodus sargus (White seabream).